Here is a 1336-residue protein sequence, read N- to C-terminus: Cytokinesis protein sepH (1336 aa).

Residues M1–E10 are compositionally biased toward low complexity. The disordered stretch occupies residues M1–V46. Residues K36 to V46 show a composition bias toward basic and acidic residues. The Protein kinase domain occupies Y59 to I309. ATP-binding positions include L65–V73 and K88. D181 acts as the Proton acceptor in catalysis. Residues S368–D402 are disordered. The span at H384 to D393 shows a compositional bias: basic and acidic residues. A coiled-coil region spans residues A654 to E682. The segment covering E1194–K1205 has biased composition (basic and acidic residues). The interval E1194–S1336 is disordered. Polar residues predominate over residues T1213–N1236. Composition is skewed to low complexity over residues P1253–P1264 and P1272–S1285. A compositionally biased stretch (basic residues) spans S1315–P1327.

The protein belongs to the protein kinase superfamily. Ser/Thr protein kinase family. CDC7 subfamily. Mg(2+) serves as cofactor.

The catalysed reaction is L-seryl-[protein] + ATP = O-phospho-L-seryl-[protein] + ADP + H(+). The enzyme catalyses L-threonyl-[protein] + ATP = O-phospho-L-threonyl-[protein] + ADP + H(+). Functionally, required for early events during cytokinesis including localization of cytoskeletal components to the cytokinetic ring. In Aspergillus niger (strain ATCC MYA-4892 / CBS 513.88 / FGSC A1513), this protein is Cytokinesis protein sepH.